A 728-amino-acid polypeptide reads, in one-letter code: Phosphoribosylformylglycinamidine synthase subunit PurL (728 aa).

Histidine 42 is a catalytic residue. ATP-binding residues include tyrosine 45 and lysine 84. Residue glutamate 86 coordinates Mg(2+). Substrate is bound by residues 87 to 90 (SHNH) and arginine 109. Histidine 88 functions as the Proton acceptor in the catalytic mechanism. Aspartate 110 is a Mg(2+) binding site. Residue glutamine 237 coordinates substrate. A Mg(2+)-binding site is contributed by aspartate 265. Residue 309–311 (ESQ) participates in substrate binding. Positions 491 and 528 each coordinate ATP. Asparagine 529 provides a ligand contact to Mg(2+). Serine 531 serves as a coordination point for substrate.

This sequence belongs to the FGAMS family. Monomer. Part of the FGAM synthase complex composed of 1 PurL, 1 PurQ and 2 PurS subunits.

The protein localises to the cytoplasm. It carries out the reaction N(2)-formyl-N(1)-(5-phospho-beta-D-ribosyl)glycinamide + L-glutamine + ATP + H2O = 2-formamido-N(1)-(5-O-phospho-beta-D-ribosyl)acetamidine + L-glutamate + ADP + phosphate + H(+). It functions in the pathway purine metabolism; IMP biosynthesis via de novo pathway; 5-amino-1-(5-phospho-D-ribosyl)imidazole from N(2)-formyl-N(1)-(5-phospho-D-ribosyl)glycinamide: step 1/2. Part of the phosphoribosylformylglycinamidine synthase complex involved in the purines biosynthetic pathway. Catalyzes the ATP-dependent conversion of formylglycinamide ribonucleotide (FGAR) and glutamine to yield formylglycinamidine ribonucleotide (FGAM) and glutamate. The FGAM synthase complex is composed of three subunits. PurQ produces an ammonia molecule by converting glutamine to glutamate. PurL transfers the ammonia molecule to FGAR to form FGAM in an ATP-dependent manner. PurS interacts with PurQ and PurL and is thought to assist in the transfer of the ammonia molecule from PurQ to PurL. The sequence is that of Phosphoribosylformylglycinamidine synthase subunit PurL from Campylobacter jejuni subsp. doylei (strain ATCC BAA-1458 / RM4099 / 269.97).